The following is a 167-amino-acid chain: Probable chemoreceptor glutamine deamidase CheD (167 aa).

This sequence belongs to the CheD family.

The catalysed reaction is L-glutaminyl-[protein] + H2O = L-glutamyl-[protein] + NH4(+). Functionally, probably deamidates glutamine residues to glutamate on methyl-accepting chemotaxis receptors (MCPs), playing an important role in chemotaxis. This chain is Probable chemoreceptor glutamine deamidase CheD, found in Natronomonas pharaonis (strain ATCC 35678 / DSM 2160 / CIP 103997 / JCM 8858 / NBRC 14720 / NCIMB 2260 / Gabara) (Halobacterium pharaonis).